Here is a 211-residue protein sequence, read N- to C-terminus: Thioredoxin domain-containing protein 9 homolog (211 aa).

The Thioredoxin domain occupies 68–178 (YSEIHSEKDF…LEERIARAQV (111 aa)). Residues 184 to 203 (ESSSLKPKSTTQVRRNVRQS) are compositionally biased toward polar residues. Residues 184 to 211 (ESSSLKPKSTTQVRRNVRQSARSDSDSE) are disordered.

This is Thioredoxin domain-containing protein 9 homolog from Arabidopsis thaliana (Mouse-ear cress).